Reading from the N-terminus, the 86-residue chain is MVHICRLLVLMGMLLCLSAQFASSQHWSHGWYPGGKREIDIYDTSEVSGEIKLCEAGKCSYLRPQGRNILKTILLDALIRDFQKRK.

The first 24 residues, 1-24 (MVHICRLLVLMGMLLCLSAQFASS), serve as a signal peptide directing secretion. Gln-25 carries the pyrrolidone carboxylic acid modification. Glycine amide is present on Gly-34.

Belongs to the GnRH family.

The protein resides in the secreted. In terms of biological role, stimulates the secretion of gonadotropins. The sequence is that of Progonadoliberin-2 (gnrh2) from Rutilus rutilus (Roach).